A 404-amino-acid chain; its full sequence is Argininosuccinate synthase (404 aa).

Residues 12-20 (AYSGGLDTS) and A39 contribute to the ATP site. Residues Y91 and S96 each coordinate L-citrulline. Residue G121 participates in ATP binding. 3 residues coordinate L-aspartate: T123, N127, and D128. An L-citrulline-binding site is contributed by N127. Residues R131, S180, S189, E265, and Y277 each contribute to the L-citrulline site.

This sequence belongs to the argininosuccinate synthase family. Type 1 subfamily. As to quaternary structure, homotetramer.

It localises to the cytoplasm. The catalysed reaction is L-citrulline + L-aspartate + ATP = 2-(N(omega)-L-arginino)succinate + AMP + diphosphate + H(+). It functions in the pathway amino-acid biosynthesis; L-arginine biosynthesis; L-arginine from L-ornithine and carbamoyl phosphate: step 2/3. This chain is Argininosuccinate synthase, found in Vibrio campbellii (strain ATCC BAA-1116).